The sequence spans 642 residues: DNA gyrase subunit B (642 aa).

In terms of domain architecture, Toprim spans 422-536 (CELFIVEGDS…AGYVYIAQPP (115 aa)). Glutamate 428, aspartate 501, and aspartate 503 together coordinate Mg(2+).

The protein belongs to the type II topoisomerase family. In terms of assembly, heterotetramer, composed of two GyrA and two GyrB chains. Within the heterotetramer, GyrA contains the active site tyrosine that forms a covalent intermediate with the DNA, while GyrB contributes the cofactor binding sites and catalyzes ATP hydrolysis. It depends on Mg(2+) as a cofactor. Requires Mn(2+) as cofactor. Ca(2+) is required as a cofactor.

It localises to the cytoplasm. The catalysed reaction is ATP-dependent breakage, passage and rejoining of double-stranded DNA.. Pyrrolopyrimidines inhibit both GyrB and its paralog in topoisomerase IV (parE). Functionally, DNA gyrase negatively supercoils closed circular double-stranded DNA in an ATP-dependent manner and also catalyzes the interconversion of other topological isomers of double-stranded DNA rings, including catenanes and knotted rings. This is DNA gyrase subunit B from Enterococcus faecalis (strain ATCC 700802 / V583).